A 167-amino-acid polypeptide reads, in one-letter code: ATP synthase subunit b (167 aa).

The helical transmembrane segment at 7–25 threads the bilayer; that stretch reads SFLLAVSFVIFIYLIYRPA.

Belongs to the ATPase B chain family. F-type ATPases have 2 components, F(1) - the catalytic core - and F(0) - the membrane proton channel. F(1) has five subunits: alpha(3), beta(3), gamma(1), delta(1), epsilon(1). F(0) has three main subunits: a(1), b(2) and c(10-14). The alpha and beta chains form an alternating ring which encloses part of the gamma chain. F(1) is attached to F(0) by a central stalk formed by the gamma and epsilon chains, while a peripheral stalk is formed by the delta and b chains.

The protein resides in the cell inner membrane. F(1)F(0) ATP synthase produces ATP from ADP in the presence of a proton or sodium gradient. F-type ATPases consist of two structural domains, F(1) containing the extramembraneous catalytic core and F(0) containing the membrane proton channel, linked together by a central stalk and a peripheral stalk. During catalysis, ATP synthesis in the catalytic domain of F(1) is coupled via a rotary mechanism of the central stalk subunits to proton translocation. Functionally, component of the F(0) channel, it forms part of the peripheral stalk, linking F(1) to F(0). The polypeptide is ATP synthase subunit b (Rickettsia typhi (strain ATCC VR-144 / Wilmington)).